The following is a 341-amino-acid chain: MSMTPKLALQRLIDHTDFTHEEMLDVMQQIMGGAFTTVQIAGFLAGLRVKGETVTEIAAAAQVMRALSSKVEVEDSSYLVDTCGTGGAPTKAFNVSTASAFVAAGAGARIAKHGGRAASSKSGSADVLEALGVNIGLTPEQVARCVNEAGIGFMFAPNHHAAMKYAAPVRRELGVRTMFNLLGPMTNPAGAKRQVMGVFDRDLVSLLAHTLKKLGSEHVMVVHSADGMDEISFSADTYVAELKHGEVNEYTLNPAQFDMPLHEIDSIHVENAQQSSEIILGVLSGARGPARDIVLLNAGAAIYVSGIAGDLQDGIAQAAHSLDSGAALHKLQQLKALSQAA.

Residues glycine 84, 94-97 (NVST), 112-120 (KHGGRAASS), and serine 124 each bind 5-phospho-alpha-D-ribose 1-diphosphate. Glycine 84 lines the anthranilate pocket. Serine 96 provides a ligand contact to Mg(2+). Arginine 170 is a binding site for anthranilate. Residues aspartate 229 and glutamate 230 each contribute to the Mg(2+) site.

This sequence belongs to the anthranilate phosphoribosyltransferase family. Homodimer. Mg(2+) is required as a cofactor.

The enzyme catalyses N-(5-phospho-beta-D-ribosyl)anthranilate + diphosphate = 5-phospho-alpha-D-ribose 1-diphosphate + anthranilate. Its pathway is amino-acid biosynthesis; L-tryptophan biosynthesis; L-tryptophan from chorismate: step 2/5. In terms of biological role, catalyzes the transfer of the phosphoribosyl group of 5-phosphorylribose-1-pyrophosphate (PRPP) to anthranilate to yield N-(5'-phosphoribosyl)-anthranilate (PRA). The polypeptide is Anthranilate phosphoribosyltransferase (Methylobacillus flagellatus (strain ATCC 51484 / DSM 6875 / VKM B-1610 / KT)).